The sequence spans 151 residues: 6,7-dimethyl-8-ribityllumazine synthase (151 aa).

Residues Phe23, 55–57, and 79–81 contribute to the 5-amino-6-(D-ribitylamino)uracil site; these read AYE and AVI. 84–85 is a binding site for (2S)-2-hydroxy-3-oxobutyl phosphate; sequence AT. The Proton donor role is filled by His87. Phe111 lines the 5-amino-6-(D-ribitylamino)uracil pocket. A (2S)-2-hydroxy-3-oxobutyl phosphate-binding site is contributed by Arg125.

It belongs to the DMRL synthase family.

It carries out the reaction (2S)-2-hydroxy-3-oxobutyl phosphate + 5-amino-6-(D-ribitylamino)uracil = 6,7-dimethyl-8-(1-D-ribityl)lumazine + phosphate + 2 H2O + H(+). The protein operates within cofactor biosynthesis; riboflavin biosynthesis; riboflavin from 2-hydroxy-3-oxobutyl phosphate and 5-amino-6-(D-ribitylamino)uracil: step 1/2. Catalyzes the formation of 6,7-dimethyl-8-ribityllumazine by condensation of 5-amino-6-(D-ribitylamino)uracil with 3,4-dihydroxy-2-butanone 4-phosphate. This is the penultimate step in the biosynthesis of riboflavin. This Leptospira interrogans serogroup Icterohaemorrhagiae serovar copenhageni (strain Fiocruz L1-130) protein is 6,7-dimethyl-8-ribityllumazine synthase.